Here is a 730-residue protein sequence, read N- to C-terminus: Elongation factor 2 (730 aa).

Positions 19 to 260 (QRIRNIGIVA…MVIHFLPNPL (242 aa)) constitute a tr-type G domain. GTP-binding positions include 28 to 35 (AHIDHGKT), 94 to 98 (DTPGH), and 148 to 151 (NKVD). His-596 is subject to Diphthamide.

Belongs to the TRAFAC class translation factor GTPase superfamily. Classic translation factor GTPase family. EF-G/EF-2 subfamily.

Its subcellular location is the cytoplasm. In terms of biological role, catalyzes the GTP-dependent ribosomal translocation step during translation elongation. During this step, the ribosome changes from the pre-translocational (PRE) to the post-translocational (POST) state as the newly formed A-site-bound peptidyl-tRNA and P-site-bound deacylated tRNA move to the P and E sites, respectively. Catalyzes the coordinated movement of the two tRNA molecules, the mRNA and conformational changes in the ribosome. This Methanosarcina mazei (strain ATCC BAA-159 / DSM 3647 / Goe1 / Go1 / JCM 11833 / OCM 88) (Methanosarcina frisia) protein is Elongation factor 2.